Consider the following 145-residue polypeptide: Basic phospholipase A2 cPm08 (145 aa).

Positions Met1–Ala21 are cleaved as a signal peptide. Positions Ile22–Leu27 are excised as a propeptide. 7 disulfide bridges follow: Cys38–Cys98, Cys54–Cys144, Cys56–Cys72, Cys71–Cys125, Cys78–Cys118, Cys87–Cys111, and Cys105–Cys116. Residues Tyr55, Gly57, and Gly59 each contribute to the Ca(2+) site. His75 is a catalytic residue. Asp76 serves as a coordination point for Ca(2+). Residue Asp119 is part of the active site.

This sequence belongs to the phospholipase A2 family. Group I subfamily. D49 sub-subfamily. It depends on Ca(2+) as a cofactor. Expressed by the venom gland.

It localises to the secreted. The enzyme catalyses a 1,2-diacyl-sn-glycero-3-phosphocholine + H2O = a 1-acyl-sn-glycero-3-phosphocholine + a fatty acid + H(+). In terms of biological role, PLA2 catalyzes the calcium-dependent hydrolysis of the 2-acyl groups in 3-sn-phosphoglycerides. The sequence is that of Basic phospholipase A2 cPm08 from Laticauda semifasciata (Black-banded sea krait).